The sequence spans 151 residues: Group 10 secretory phospholipase A2 (151 aa).

Positions methionine 1–serine 17 are cleaved as a signal peptide. Residues glutamate 18 to arginine 28 constitute a propeptide that is removed on maturation. Cystine bridges form between cysteine 39-cysteine 97, cysteine 53-cysteine 143, cysteine 55-cysteine 71, cysteine 70-cysteine 125, cysteine 76-cysteine 150, cysteine 77-cysteine 118, cysteine 86-cysteine 111, and cysteine 104-cysteine 116. Residues tyrosine 54, glycine 56, and glycine 58 each coordinate Ca(2+). Histidine 74 is a catalytic residue. Position 75 (aspartate 75) interacts with Ca(2+). Aspartate 119 is a catalytic residue.

It belongs to the phospholipase A2 family. Interacts with PLA2R1; this interaction mediates PLA2G10 clearance and inactivation. Requires Ca(2+) as cofactor.

It is found in the secreted. The protein resides in the lysosome. Its subcellular location is the cytoplasmic vesicle. It localises to the secretory vesicle. The protein localises to the acrosome. The catalysed reaction is a 1,2-diacyl-sn-glycero-3-phosphocholine + H2O = a 1-acyl-sn-glycero-3-phosphocholine + a fatty acid + H(+). The enzyme catalyses 1-hexadecanoyl-2-(9Z-octadecenoyl)-sn-glycero-3-phosphocholine + H2O = 1-hexadecanoyl-sn-glycero-3-phosphocholine + (9Z)-octadecenoate + H(+). It catalyses the reaction 1-octadecanoyl-2-(5Z,8Z,11Z,14Z-eicosatetraenoyl)-sn-glycero-3-phosphocholine + H2O = 1-octadecanoyl-sn-glycero-3-phosphocholine + (5Z,8Z,11Z,14Z)-eicosatetraenoate + H(+). It carries out the reaction 1,2-dihexadecanoyl-sn-glycero-3-phosphocholine + H2O = 1-hexadecanoyl-sn-glycero-3-phosphocholine + hexadecanoate + H(+). The catalysed reaction is 1-hexadecanoyl-2-(9Z-octadecenoyl)-sn-glycero-3-phosphoglycerol + H2O = 1-hexadecanoyl-sn-glycero-3-phosphoglycerol + (9Z)-octadecenoate + H(+). The enzyme catalyses 1,2-dihexadecanoyl-sn-glycero-3-phospho-(1'-sn-glycerol) + H2O = 1-hexadecanoyl-sn-glycero-3-phospho-(1'-sn-glycerol) + hexadecanoate + H(+). It catalyses the reaction 1-hexadecanoyl-2-(9Z-octadecenoyl)-sn-glycero-3-phospho-L-serine + H2O = 1-hexadecanoyl-sn-glycero-3-phospho-L-serine + (9Z)-octadecenoate + H(+). It carries out the reaction 1-hexadecanoyl-2-(9Z,12Z-octadecadienoyl)-sn-glycero-3-phosphoethanolamine + H2O = 1-hexadecanoyl-sn-glycero-3-phosphoethanolamine + (9Z,12Z)-octadecadienoate + H(+). The catalysed reaction is 1-hexadecanoyl-2-(9Z-octadecenoyl)-sn-glycero-3-phosphate + H2O = 1-hexadecanoyl-sn-glycero-3-phosphate + (9Z)-octadecenoate + H(+). The enzyme catalyses 1-O-hexadecyl-2-acetyl-sn-glycero-3-phosphocholine + H2O = 1-O-hexadecyl-sn-glycero-3-phosphocholine + acetate + H(+). Secretory calcium-dependent phospholipase A2 that primarily targets extracellular phospholipids. Hydrolyzes the ester bond of the fatty acyl group attached at sn-2 position of phospholipids with preference for phosphatidylcholines and phosphatidylglycerols over phosphatidylethanolamines. Preferentially releases sn-2 omega-6 and omega-3 polyunsaturated fatty acyl (PUFA) chains over saturated fatty acyls. Contributes to phospholipid remodeling of very low-density lipoprotein (VLDL), low-density lipoprotein (LDL) and high-density lipoprotein (HDL) particles. Hydrolyzes LDL phospholipids releasing unsaturated fatty acids that regulate macrophage differentiation toward foam cells. Efficiently hydrolyzes and inactivates platelet activating factor (PAF), a potent lipid mediator present in oxidized LDL. May act in an autocrine and paracrine manner. Secreted by lung epithelium, targets membrane phospholipids of infiltrating eosinophils, releasing arachidonate and boosting eicosanoid and cysteinyl leukotriene synthesis involved in airway inflammatory response. Secreted by gut epithelium, hydrolyzes dietary and biliary phosphatidylcholines in the gastrointestinal lumen. Plays a stem cell regulator role in colon epithelium. Within intracellular compartment, mediates Paneth-like cell differentiation and its stem cell supporting functions by inhibiting the Wnt signaling pathway in intestinal stem cell (ISC). Secreted in the intestinal lumen upon inflammation, acts in an autocrine way and promotes prostaglandin E2 synthesis that stimulates Wnt signaling pathway in ISCs and tissue regeneration. May participate in hair follicle morphogenesis by regulating phosphatidylethanolamines metabolism at the outermost epithelial layer and facilitating melanin synthesis. By releasing lysophosphatidylcholines (LPCs) at sperm acrosome, controls sperm cell capacitation, acrosome reaction and overall fertility. May promote neurite outgrowth in neuron fibers involved in nociception. Contributes to lipid remodeling of cellular membranes and generation of lipid mediators involved in pathogen clearance. Cleaves sn-2 fatty acyl chains of phosphatidylglycerols and phosphatidylethanolamines, which are major components of membrane phospholipids in bacteria. Displays bactericidal activity against Gram-positive bacteria by directly hydrolyzing phospholipids of the bacterial membrane. In pulmonary epithelium, may contribute to host defense response against adenoviral infection. Prevents adenovirus entry into host cells by hydrolyzing host cell plasma membrane, releasing C16:0 LPCs that inhibit virus-mediated membrane fusion and viral infection. Likely prevents adenoviral entry into the endosomes of host cells. May play a role in maturation and activation of innate immune cells including macrophages, group 2 innate lymphoid cells and mast cells. This is Group 10 secretory phospholipase A2 (Pla2g10) from Rattus norvegicus (Rat).